The chain runs to 176 residues: Ribosome maturation factor RimM (176 aa).

A PRC barrel domain is found at 93–166 (EGEYYHADLI…RVVIEMPGEI (74 aa)).

It belongs to the RimM family. As to quaternary structure, binds ribosomal protein uS19.

The protein localises to the cytoplasm. In terms of biological role, an accessory protein needed during the final step in the assembly of 30S ribosomal subunit, possibly for assembly of the head region. Essential for efficient processing of 16S rRNA. May be needed both before and after RbfA during the maturation of 16S rRNA. It has affinity for free ribosomal 30S subunits but not for 70S ribosomes. The polypeptide is Ribosome maturation factor RimM (Rhodopseudomonas palustris (strain BisA53)).